Here is a 243-residue protein sequence, read N- to C-terminus: UTP--glucose-1-phosphate uridylyltransferase AglF (243 aa).

It belongs to the UDPGP type 2 family.

The catalysed reaction is alpha-D-glucose 1-phosphate + UTP + H(+) = UDP-alpha-D-glucose + diphosphate. Its pathway is cell surface structure biogenesis; S-layer biogenesis. Functionally, involved in the assembly of a N-linked pentasaccharide that decorates the S-layer glycoprotein and flagellins. Involved in the biosynthesis of the hexuronic acid found at position 3 of the pentasaccharide. This chain is UTP--glucose-1-phosphate uridylyltransferase AglF (aglF), found in Haloferax volcanii (strain ATCC 29605 / DSM 3757 / JCM 8879 / NBRC 14742 / NCIMB 2012 / VKM B-1768 / DS2) (Halobacterium volcanii).